Reading from the N-terminus, the 645-residue chain is Threonine--tRNA ligase (645 aa).

Residues Met1–Thr63 enclose the TGS domain. Positions Asp242 to Pro540 are catalytic. Residues Cys336, His387, and His517 each contribute to the Zn(2+) site.

The protein belongs to the class-II aminoacyl-tRNA synthetase family. As to quaternary structure, homodimer. It depends on Zn(2+) as a cofactor.

It is found in the cytoplasm. It carries out the reaction tRNA(Thr) + L-threonine + ATP = L-threonyl-tRNA(Thr) + AMP + diphosphate + H(+). Functionally, catalyzes the attachment of threonine to tRNA(Thr) in a two-step reaction: L-threonine is first activated by ATP to form Thr-AMP and then transferred to the acceptor end of tRNA(Thr). Also edits incorrectly charged L-seryl-tRNA(Thr). This chain is Threonine--tRNA ligase, found in Staphylococcus saprophyticus subsp. saprophyticus (strain ATCC 15305 / DSM 20229 / NCIMB 8711 / NCTC 7292 / S-41).